The sequence spans 70 residues: Large ribosomal subunit protein uL29 (70 aa).

This sequence belongs to the universal ribosomal protein uL29 family.

The sequence is that of Large ribosomal subunit protein uL29 from Clostridium botulinum (strain Alaska E43 / Type E3).